The chain runs to 316 residues: Porphobilinogen deaminase (316 aa).

Cys-245 carries the post-translational modification S-(dipyrrolylmethanemethyl)cysteine.

It belongs to the HMBS family. As to quaternary structure, monomer. Requires dipyrromethane as cofactor.

It carries out the reaction 4 porphobilinogen + H2O = hydroxymethylbilane + 4 NH4(+). It functions in the pathway porphyrin-containing compound metabolism; protoporphyrin-IX biosynthesis; coproporphyrinogen-III from 5-aminolevulinate: step 2/4. Its pathway is porphyrin-containing compound metabolism; chlorophyll biosynthesis. Tetrapolymerization of the monopyrrole PBG into the hydroxymethylbilane pre-uroporphyrinogen in several discrete steps. This is Porphobilinogen deaminase from Prochlorococcus marinus (strain AS9601).